We begin with the raw amino-acid sequence, 777 residues long: Acyl-homoserine lactone acylase PvdQ (777 aa).

The signal sequence occupies residues 1-25 (MIISRQLPSFCLAALFLSFSGGAHA). Residues 196-218 (AGLPAEHWQLAAARQQRFALDRG) constitute a propeptide, spacer peptide. Serine 219 (nucleophile) is an active-site residue.

It belongs to the peptidase S45 family. As to quaternary structure, heterodimer of an alpha subunit and a beta subunit processed from the same precursor.

Its subcellular location is the periplasm. The enzyme catalyses an N-acyl-L-homoserine lactone + H2O = L-homoserine lactone + a carboxylate. Catalyzes the deacylation of acyl-homoserine lactone (AHL or acyl-HSL), releasing homoserine lactone (HSL) and the corresponding fatty acid. Possesses a specificity for the degradation of long-chain acyl-HSLs (side chains of 11 to 14 carbons in length). This chain is Acyl-homoserine lactone acylase PvdQ (pvdQ), found in Pseudomonas fluorescens (strain ATCC BAA-477 / NRRL B-23932 / Pf-5).